The sequence spans 181 residues: Mannose-specific lectin (181 aa).

The signal sequence occupies residues 1-30 (MGRTTSSPKAMMRIATVAAILTILASTCMA). Residues 31–140 (RNVLTNGEGL…DIWSTGTYRR (110 aa)) form the Bulb-type lectin domain. Alpha-D-mannopyranose-binding residues include glutamine 56, aspartate 58, asparagine 60, tyrosine 64, tryptophan 71, alanine 72, asparagine 74, glutamine 88, aspartate 90, asparagine 92, tyrosine 96, valine 103, tryptophan 104, asparagine 107, asparagine 114, glutamine 120, aspartate 122, asparagine 124, tyrosine 128, and tryptophan 133. Cysteine 59 and cysteine 83 are disulfide-bonded.

In terms of assembly, homodimer.

Its subcellular location is the secreted. Its function is as follows. Mannose-specific lectin. Shows agglutinating activity towards rabbit erythrocytes. However, it does not show agglutinating activity towards human erythrocytes. Has insecticidal activity against the cotton leafworm S.littoralis and the peach potato aphid M.persicae. Also displays antiviral activity and therefore may contribute to defense against infections. In Allium sativum (Garlic), this protein is Mannose-specific lectin.